The primary structure comprises 515 residues: MSREKYYITTAIAYPNGKPHIGHAYELIATDAMARFQRLNGMDVYFLTGTDEHGIKMLQSARKEGITPRELADRNTSAFRRMAEVLNSSNDDYIRTSEERHYKASQVIWQAMVANGDIYKGGYAGWYSVRDEAYYGEEETEVRADGVRYGPQGTPVEWVEEESYFFRLSAYQDKLLDLYENNPGFIMPAERRNEIVSFVKSGLKDLSISRTTFDWGIPVPGDEKHVMYVWVDALTNYITALGYPDTTDERWAYWPANAHIIGKDISRFHAVYWPAFLMSAQLPLPKRVFAHGFLFNRGEKMSKSVGNVIDPFELVERYGLDQLRYFLMREVPFGQDGSYSHEAIVNRTNADLANDLGNLAQRSLSMIAKNCEGKVPQPGAFSEADKAILDQADAALETARKAMDDQALHLALGAIFAVVAEANRYFAGQEPWALRKTDPARMGTVLYVTAEVLRRVGIMVQPFIPQSAEKLLDILAAPADKRQFADVLASPLAGGTDLPAPQPVFPRYVEADEQN.

The 'HIGH' region motif lies at 13 to 23 (AYPNGKPHIGH). A 'KMSKS' region motif is present at residues 300–304 (KMSKS). Position 303 (K303) interacts with ATP.

Belongs to the class-I aminoacyl-tRNA synthetase family. MetG type 2B subfamily. Monomer.

It is found in the cytoplasm. The enzyme catalyses tRNA(Met) + L-methionine + ATP = L-methionyl-tRNA(Met) + AMP + diphosphate. Functionally, is required not only for elongation of protein synthesis but also for the initiation of all mRNA translation through initiator tRNA(fMet) aminoacylation. The protein is Methionine--tRNA ligase of Brucella melitensis biotype 1 (strain ATCC 23456 / CCUG 17765 / NCTC 10094 / 16M).